The sequence spans 221 residues: Ribosomal RNA small subunit methyltransferase Nep1 (221 aa).

Residues Gly-174, Gly-179, and 196–201 (VGDEPL) each bind S-adenosyl-L-methionine.

Belongs to the class IV-like SAM-binding methyltransferase superfamily. RNA methyltransferase NEP1 family. As to quaternary structure, homodimer.

It catalyses the reaction a pseudouridine in rRNA + S-adenosyl-L-methionine = an N(1)-methylpseudouridine in rRNA + S-adenosyl-L-homocysteine + H(+). Its function is as follows. Methyltransferase involved in ribosomal biogenesis. Specifically catalyzes the N1-methylation of the pseudouridine corresponding to position 914 in M.jannaschii 16S rRNA. The sequence is that of Ribosomal RNA small subunit methyltransferase Nep1 from Pyrobaculum neutrophilum (strain DSM 2338 / JCM 9278 / NBRC 100436 / V24Sta) (Thermoproteus neutrophilus).